Consider the following 201-residue polypeptide: Peptide deformylase (201 aa).

Residues Cys-121 and His-163 each contribute to the Fe cation site. Glu-164 is an active-site residue. Residue His-167 coordinates Fe cation.

This sequence belongs to the polypeptide deformylase family. Fe(2+) serves as cofactor.

The enzyme catalyses N-terminal N-formyl-L-methionyl-[peptide] + H2O = N-terminal L-methionyl-[peptide] + formate. Functionally, removes the formyl group from the N-terminal Met of newly synthesized proteins. Requires at least a dipeptide for an efficient rate of reaction. N-terminal L-methionine is a prerequisite for activity but the enzyme has broad specificity at other positions. In Synechococcus sp. (strain CC9902), this protein is Peptide deformylase.